The chain runs to 591 residues: NADP-dependent malic enzyme (591 aa).

Residues 1-10 (MESTLKEMRD) show a composition bias toward basic and acidic residues. Positions 1–26 (MESTLKEMRDGASVLDMDPKSTVGGG) are disordered. Tyrosine 139 functions as the Proton donor in the catalytic mechanism. NAD(+) is bound at residue arginine 192. Lysine 210 acts as the Proton acceptor in catalysis. A divalent metal cation-binding residues include glutamate 282, aspartate 283, and aspartate 306. Position 306 (aspartate 306) interacts with NAD(+). 335 to 351 (LFLGAGEAGTGIAELIA) lines the NADP(+) pocket. Residue asparagine 447 coordinates NAD(+).

It belongs to the malic enzymes family. Homotetramer. Requires Mg(2+) as cofactor. Mn(2+) is required as a cofactor. MRNA found twofold higher in leaves and stems than in roots.

The protein resides in the cytoplasm. The catalysed reaction is (S)-malate + NADP(+) = pyruvate + CO2 + NADPH. It carries out the reaction oxaloacetate + H(+) = pyruvate + CO2. The sequence is that of NADP-dependent malic enzyme from Populus trichocarpa (Western balsam poplar).